Consider the following 409-residue polypeptide: E3 ubiquitin-protein ligase MARCHF4 (409 aa).

The N-terminal stretch at 1–17 is a signal peptide; it reads MLMPLGGLLWWWCCCCG. The disordered stretch occupies residues 92–133; sequence GPREAVGRETPPLPPPPPLPPSGDDDWDGPATGPPASLLSSA. Residues 102 to 112 are compositionally biased toward pro residues; sequence PPLPPPPPLPP. An RING-CH-type zinc finger spans residues 154–214; the sequence is DSGMRTPLCR…ELCYYKYHVI (61 aa). 8 residues coordinate Zn(2+): Cys-162, Cys-165, Cys-178, Cys-180, His-188, Cys-191, Cys-204, and Cys-207. 2 helical membrane-spanning segments follow: residues 242–262 and 271–291; these read LGSL…FSPS and LFQI…GLII. Disordered regions lie at residues 323-372 and 389-409; these read EDQK…GPVS and PHDQ…VTTV. Positions 328–343 are enriched in polar residues; the sequence is GGRTNLQTSSSAQANL.

The protein localises to the golgi apparatus membrane. The enzyme catalyses S-ubiquitinyl-[E2 ubiquitin-conjugating enzyme]-L-cysteine + [acceptor protein]-L-lysine = [E2 ubiquitin-conjugating enzyme]-L-cysteine + N(6)-ubiquitinyl-[acceptor protein]-L-lysine.. It functions in the pathway protein modification; protein ubiquitination. In terms of biological role, E3 ubiquitin-protein ligase that may mediate ubiquitination of MHC-I and CD4, and promote their subsequent endocytosis and sorting to lysosomes via multivesicular bodies. E3 ubiquitin ligases accept ubiquitin from an E2 ubiquitin-conjugating enzyme in the form of a thioester and then directly transfer the ubiquitin to targeted substrates. The polypeptide is E3 ubiquitin-protein ligase MARCHF4 (Marchf4) (Mus musculus (Mouse)).